The chain runs to 885 residues: Eukaryotic translation initiation factor 3 subunit C (885 aa).

The segment at 1 to 81 is disordered; sequence MSFFAKLQGS…SDSDDERQAV (81 aa). Residues 9-28 show a composition bias toward low complexity; sequence GSDSESSSGSESEESILSGS. Positions 55 to 76 are enriched in acidic residues; that stretch reads EESESEEESSDEDEEEMSDSDD. A PCI domain is found at 624–797; the sequence is FHMHLNVELL…GVVIFHRVEQ (174 aa). A disordered region spans residues 822-885; the sequence is LDVKLGNQGQ…TTMGRRVTAQ (64 aa). Gly residues predominate over residues 855-872; sequence RGTYRGRGGRGGRGGFNQ.

The protein belongs to the eIF-3 subunit C family. As to quaternary structure, component of the eukaryotic translation initiation factor 3 (eIF-3) complex.

It localises to the cytoplasm. Component of the eukaryotic translation initiation factor 3 (eIF-3) complex, which is involved in protein synthesis of a specialized repertoire of mRNAs and, together with other initiation factors, stimulates binding of mRNA and methionyl-tRNAi to the 40S ribosome. The eIF-3 complex specifically targets and initiates translation of a subset of mRNAs involved in cell proliferation. This is Eukaryotic translation initiation factor 3 subunit C from Cryptococcus neoformans var. neoformans serotype D (strain B-3501A) (Filobasidiella neoformans).